The following is a 282-amino-acid chain: Dof zinc finger protein 4 (282 aa).

A Dof-type zinc finger spans residues 45 to 99 (VKCPRCESTNTKFCYYNNYNLSQPRHFCKSCRRYWTKGGVLRNVPVGGGCRKTKR). Residues Cys47, Cys50, Cys72, and Cys75 each contribute to the Zn(2+) site. A disordered region spans residues 89–161 (PVGGGCRKTK…TTPATPSSNT (73 aa)). 2 stretches are compositionally biased toward low complexity: residues 102–117 (SSSAASSAPSTPTAAT) and 125–161 (RASASSPRSSSGGSGNTSPTAAAATTPTTPATPSSNT).

It is found in the nucleus. Functionally, transcription factor that may transactivate seed storage protein genes in developing seeds. This chain is Dof zinc finger protein 4, found in Oryza sativa subsp. japonica (Rice).